We begin with the raw amino-acid sequence, 157 residues long: S-ribosylhomocysteine lyase (157 aa).

Fe cation is bound by residues H54, H58, and C126.

The protein belongs to the LuxS family. In terms of assembly, homodimer. Requires Fe cation as cofactor.

The catalysed reaction is S-(5-deoxy-D-ribos-5-yl)-L-homocysteine = (S)-4,5-dihydroxypentane-2,3-dione + L-homocysteine. Its function is as follows. Involved in the synthesis of autoinducer 2 (AI-2) which is secreted by bacteria and is used to communicate both the cell density and the metabolic potential of the environment. The regulation of gene expression in response to changes in cell density is called quorum sensing. Catalyzes the transformation of S-ribosylhomocysteine (RHC) to homocysteine (HC) and 4,5-dihydroxy-2,3-pentadione (DPD). The chain is S-ribosylhomocysteine lyase from Bacillus velezensis (strain DSM 23117 / BGSC 10A6 / LMG 26770 / FZB42) (Bacillus amyloliquefaciens subsp. plantarum).